A 431-amino-acid chain; its full sequence is Glutamate--tRNA ligase 1 (431 aa).

A 'HIGH' region motif is present at residues 6 to 16 (PSPTGDMHIGN). The 'KMSKS' region motif lies at 235–239 (KMSKR). Residue Lys238 participates in ATP binding.

This sequence belongs to the class-I aminoacyl-tRNA synthetase family. Glutamate--tRNA ligase type 1 subfamily. In terms of assembly, monomer.

Its subcellular location is the cytoplasm. The enzyme catalyses tRNA(Glu) + L-glutamate + ATP = L-glutamyl-tRNA(Glu) + AMP + diphosphate. Its function is as follows. Catalyzes the attachment of glutamate to tRNA(Glu) in a two-step reaction: glutamate is first activated by ATP to form Glu-AMP and then transferred to the acceptor end of tRNA(Glu). This is Glutamate--tRNA ligase 1 from Nitratiruptor sp. (strain SB155-2).